We begin with the raw amino-acid sequence, 414 residues long: Gamma-glutamyl phosphate reductase (414 aa).

The protein belongs to the gamma-glutamyl phosphate reductase family.

The protein resides in the cytoplasm. It carries out the reaction L-glutamate 5-semialdehyde + phosphate + NADP(+) = L-glutamyl 5-phosphate + NADPH + H(+). It participates in amino-acid biosynthesis; L-proline biosynthesis; L-glutamate 5-semialdehyde from L-glutamate: step 2/2. Catalyzes the NADPH-dependent reduction of L-glutamate 5-phosphate into L-glutamate 5-semialdehyde and phosphate. The product spontaneously undergoes cyclization to form 1-pyrroline-5-carboxylate. The protein is Gamma-glutamyl phosphate reductase of Francisella philomiragia subsp. philomiragia (strain ATCC 25017 / CCUG 19701 / FSC 153 / O#319-036).